A 120-amino-acid chain; its full sequence is Large ribosomal subunit protein uL18 (120 aa).

This sequence belongs to the universal ribosomal protein uL18 family. Part of the 50S ribosomal subunit; part of the 5S rRNA/L5/L18/L25 subcomplex. Contacts the 5S and 23S rRNAs.

In terms of biological role, this is one of the proteins that bind and probably mediate the attachment of the 5S RNA into the large ribosomal subunit, where it forms part of the central protuberance. The polypeptide is Large ribosomal subunit protein uL18 (Chloroflexus aggregans (strain MD-66 / DSM 9485)).